The following is a 180-amino-acid chain: Large ribosomal subunit protein uL10 (180 aa).

Belongs to the universal ribosomal protein uL10 family. Part of the ribosomal stalk of the 50S ribosomal subunit. The N-terminus interacts with L11 and the large rRNA to form the base of the stalk. The C-terminus forms an elongated spine to which L12 dimers bind in a sequential fashion forming a multimeric L10(L12)X complex.

Functionally, forms part of the ribosomal stalk, playing a central role in the interaction of the ribosome with GTP-bound translation factors. This is Large ribosomal subunit protein uL10 from Thermosipho africanus (strain TCF52B).